A 626-amino-acid chain; its full sequence is Basic helix-loop-helix ARNT-like protein 1 (626 aa).

The disordered stretch occupies residues Met-1–Arg-60. At Ser-17 the chain carries Phosphoserine; by GSK3-beta. Low complexity predominate over residues Ser-17–Gly-32. Thr-21 is modified (phosphothreonine; by GSK3-beta). A Nuclear localization signal motif is present at residues Asn-36–Gly-41. Over residues Asp-51–Arg-60 the composition is skewed to basic and acidic residues. Residues Asn-72–Leu-125 form the bHLH domain. A Phosphoserine modification is found at Ser-78. Phosphoserine; by CK2 is present on Ser-90. Positions Leu-142–Leu-152 match the Nuclear export signal 1 motif. One can recognise a PAS 1 domain in the interval Ser-143–Pro-215. A Glycyl lysine isopeptide (Lys-Gly) (interchain with G-Cter in SUMO2 and SUMO3) cross-link involves residue Lys-252. Residue Lys-259 forms a Glycyl lysine isopeptide (Lys-Gly) (interchain with G-Cter in SUMO2) linkage. Positions Pro-326–Arg-396 constitute a PAS 2 domain. Positions Leu-361 to Leu-369 match the Nuclear export signal 2 motif. The region spanning Thr-401–Asn-444 is the PAC domain. 2 disordered regions span residues Ala-458–Gly-493 and Gly-511–Asn-595. Positions Ile-484–Gly-493 are enriched in gly residues. Residues Arg-508–Gln-588 form an interaction with CIART region. Low complexity predominate over residues Gly-511–Pro-521. At Lys-538 the chain carries N6-acetyllysine.

Component of the circadian clock oscillator which includes the CRY1/2 proteins, CLOCK or NPAS2,BMAL1 or BMAL2, CSNK1D and/or CSNK1E, TIMELESS and the PER1/2/3 proteins. Forms a heterodimer with CLOCK. The CLOCK-BMAL1 heterodimer is required for E-box-dependent transactivation, for CLOCK nuclear translocation and degradation, and, for phosphorylation of both CLOCK and BMAL1. Part of a nuclear complex which also includes RACK1 and PRKCA; RACK1 and PRKCA are recruited to the complex in a circadian manner. Interacts with NPAS2. Interacts with EZH2. Interacts with SUMO3. Interacts with SIRT1. Interacts with AHR. Interacts with ID1, ID2 and ID3. Interacts with DDX4. Interacts with OGT. Interacts with EED and SUZ12. Interacts with MTA1. Interacts with CIART. Interacts with HSP90. Interacts with KAT2B and EP300. Interacts with BHLHE40/DEC1 and BHLHE41/DEC2. Interacts with RELB and the interaction is enhanced in the presence of CLOCK. Interacts with PER1, PER2, CRY1 and CRY2 and this interaction requires a translocation to the nucleus. Interaction of the CLOCK-BMAL1 heterodimer with PER or CRY inhibits transcription activation. Interaction of the CLOCK-BMAL1 with CRY1 is independent of DNA but with PER2 is off DNA. The CLOCK-BMAL1 heterodimer interacts with GSK3B. Interacts with KDM5A. Interacts with KMT2A; in a circadian manner. Interacts with UBE3A. Interacts with PRKCG. Interacts with MAGEL2. Interacts with NCOA2. Interacts with THRAP3. The CLOCK-BMAL1 heterodimer interacts with PASD1. Interacts with PASD1. Interacts with USP9X. Interacts with PIWIL2 (via PIWI domain). Interacts with HDAC3. Interacts with HNF4A. Post-translationally, ubiquitinated, leading to its proteasomal degradation. Deubiquitinated by USP9X. In terms of processing, O-glycosylated; contains O-GlcNAc. O-glycosylation by OGT prevents protein degradation by inhibiting ubiquitination. It also stabilizes the CLOCK-BMAL1 heterodimer thereby increasing CLOCK-BMAL1-mediated transcription of genes in the negative loop of the circadian clock such as PER1/2/3 and CRY1/2. Acetylated on Lys-538 by CLOCK during the repression phase of the circadian cycle. Acetylation facilitates recruitment of CRY1 protein and initiates the repression phase of the circadian cycle. Acetylated at Lys-538 by KAT5 during the activation phase of the cycle, leading to recruitment of the positive transcription elongation factor b (P-TEFb) and BRD4, followed by productive elongation of circadian transcripts. Deacetylated by SIRT1, which may result in decreased protein stability. Post-translationally, phosphorylated upon dimerization with CLOCK. Phosphorylation enhances the transcriptional activity, alters the subcellular localization and decreases the stability of the CLOCK-BMAL1 heterodimer by promoting its degradation. Phosphorylation shows circadian variations in the liver with a peak between CT10 to CT14. Phosphorylation at Ser-90 by CK2 is essential for its nuclear localization, its interaction with CLOCK and controls CLOCK nuclear entry. Dephosphorylation at Ser-78 is important for dimerization with CLOCK and transcriptional activity. In terms of processing, sumoylated on Lys-259 upon dimerization with CLOCK. Predominantly conjugated to poly-SUMO2/3 rather than SUMO1 and the level of these conjugates undergo rhythmic variation, peaking at CT9-CT12. Sumoylation localizes it exclusively to the PML body and promotes its ubiquitination in the PML body, ubiquitin-dependent proteasomal degradation and the transcriptional activity of the CLOCK-BMAL1 heterodimer. Undergoes lysosome-mediated degradation in a time-dependent manner in the liver. In terms of tissue distribution, hair follicles (at protein level). Highly expressed in the adult brain, skeletal muscle and heart.

It localises to the nucleus. Its subcellular location is the cytoplasm. The protein localises to the PML body. There is conflicting data about the effect of NAD cofactors on activity. PubMed:11441146 suggests that the redox state of the cell can modulate the transcriptional activity of the CLOCK-BMAL1 heterodimer; NADH and NADPH enhance the DNA-binding activity of the heterodimer. PubMed:23229515 reports that NADH and NADPH have no significant effect on DNA-binding activity of the CLOCK-BMAL1 heterodimer. Transcriptional activator which forms a core component of the circadian clock. The circadian clock, an internal time-keeping system, regulates various physiological processes through the generation of approximately 24 hour circadian rhythms in gene expression, which are translated into rhythms in metabolism and behavior. It is derived from the Latin roots 'circa' (about) and 'diem' (day) and acts as an important regulator of a wide array of physiological functions including metabolism, sleep, body temperature, blood pressure, endocrine, immune, cardiovascular, and renal function. Consists of two major components: the central clock, residing in the suprachiasmatic nucleus (SCN) of the brain, and the peripheral clocks that are present in nearly every tissue and organ system. Both the central and peripheral clocks can be reset by environmental cues, also known as Zeitgebers (German for 'timegivers'). The predominant Zeitgeber for the central clock is light, which is sensed by retina and signals directly to the SCN. The central clock entrains the peripheral clocks through neuronal and hormonal signals, body temperature and feeding-related cues, aligning all clocks with the external light/dark cycle. Circadian rhythms allow an organism to achieve temporal homeostasis with its environment at the molecular level by regulating gene expression to create a peak of protein expression once every 24 hours to control when a particular physiological process is most active with respect to the solar day. Transcription and translation of core clock components (CLOCK, NPAS2, BMAL1, BMAL2, PER1, PER2, PER3, CRY1 and CRY2) plays a critical role in rhythm generation, whereas delays imposed by post-translational modifications (PTMs) are important for determining the period (tau) of the rhythms (tau refers to the period of a rhythm and is the length, in time, of one complete cycle). A diurnal rhythm is synchronized with the day/night cycle, while the ultradian and infradian rhythms have a period shorter and longer than 24 hours, respectively. Disruptions in the circadian rhythms contribute to the pathology of cardiovascular diseases, cancer, metabolic syndromes and aging. A transcription/translation feedback loop (TTFL) forms the core of the molecular circadian clock mechanism. Transcription factors, CLOCK or NPAS2 and BMAL1 or BMAL2, form the positive limb of the feedback loop, act in the form of a heterodimer and activate the transcription of core clock genes and clock-controlled genes (involved in key metabolic processes), harboring E-box elements (5'-CACGTG-3') within their promoters. The core clock genes: PER1/2/3 and CRY1/2 which are transcriptional repressors form the negative limb of the feedback loop and interact with the CLOCK|NPAS2-BMAL1|BMAL2 heterodimer inhibiting its activity and thereby negatively regulating their own expression. This heterodimer also activates nuclear receptors NR1D1/2 and RORA/B/G, which form a second feedback loop and which activate and repress BMAL1 transcription, respectively. BMAL1 positively regulates myogenesis and negatively regulates adipogenesis via the transcriptional control of the genes of the canonical Wnt signaling pathway. Plays a role in normal pancreatic beta-cell function; regulates glucose-stimulated insulin secretion via the regulation of antioxidant genes NFE2L2/NRF2 and its targets SESN2, PRDX3, CCLC and CCLM. Negatively regulates the mTORC1 signaling pathway; regulates the expression of MTOR and DEPTOR. Controls diurnal oscillations of Ly6C inflammatory monocytes; rhythmic recruitment of the PRC2 complex imparts diurnal variation to chemokine expression that is necessary to sustain Ly6C monocyte rhythms. Regulates the expression of HSD3B2, STAR, PTGS2, CYP11A1, CYP19A1 and LHCGR in the ovary and also the genes involved in hair growth. Plays an important role in adult hippocampal neurogenesis by regulating the timely entry of neural stem/progenitor cells (NSPCs) into the cell cycle and the number of cell divisions that take place prior to cell-cycle exit. Regulates the circadian expression of CIART and KLF11. The CLOCK-BMAL1 heterodimer regulates the circadian expression of SERPINE1/PAI1, VWF, B3, CCRN4L/NOC, NAMPT, DBP, MYOD1, PPARGC1A, PPARGC1B, SIRT1, GYS2, F7, NGFR, GNRHR, BHLHE40/DEC1, ATF4, MTA1, KLF10 and also genes implicated in glucose and lipid metabolism. Promotes rhythmic chromatin opening, regulating the DNA accessibility of other transcription factors. The NPAS2-BMAL1 heterodimer positively regulates the expression of MAOA, F7 and LDHA and modulates the circadian rhythm of daytime contrast sensitivity by regulating the rhythmic expression of adenylate cyclase type 1 (ADCY1) in the retina. The preferred binding motif for the CLOCK-BMAL1 heterodimer is 5'-CACGTGA-3', which contains a flanking adenine nucleotide at the 3-prime end of the canonical 6-nucleotide E-box sequence. CLOCK specifically binds to the half-site 5'-CAC-3', while BMAL1 binds to the half-site 5'-GTGA-3'. The CLOCK-BMAL1 heterodimer also recognizes the non-canonical E-box motifs 5'-AACGTGA-3' and 5'-CATGTGA-3'. Essential for the rhythmic interaction of CLOCK with ASS1 and plays a critical role in positively regulating CLOCK-mediated acetylation of ASS1. Plays a role in protecting against lethal sepsis by limiting the expression of immune checkpoint protein CD274 in macrophages in a PKM2-dependent manner. Regulates the diurnal rhythms of skeletal muscle metabolism via transcriptional activation of genes promoting triglyceride synthesis (DGAT2) and metabolic efficiency (COQ10B). Functionally, (Microbial infection) Regulates SARS coronavirus-2/SARS-CoV-2 entry and replication in lung epithelial cells probably through the post-transcriptional regulation of ACE2 and interferon-stimulated gene expression. In Homo sapiens (Human), this protein is Basic helix-loop-helix ARNT-like protein 1.